A 216-amino-acid chain; its full sequence is Protein Syd (216 aa).

The protein belongs to the Syd family.

The protein localises to the cell inner membrane. In terms of biological role, interacts with the SecY protein in vivo. May bind preferentially to an uncomplexed state of SecY, thus functioning either as a chelating agent for excess SecY in the cell or as a regulatory factor that negatively controls the translocase function. The sequence is that of Protein Syd from Shewanella baltica (strain OS185).